Consider the following 124-residue polypeptide: S-adenosylmethionine decarboxylase proenzyme (124 aa).

Serine 63 acts as the Schiff-base intermediate with substrate; via pyruvic acid in catalysis. Serine 63 carries the post-translational modification Pyruvic acid (Ser); by autocatalysis. Histidine 68 (proton acceptor; for processing activity) is an active-site residue. The Proton donor; for catalytic activity role is filled by cysteine 83.

It belongs to the prokaryotic AdoMetDC family. Type 1 subfamily. In terms of assembly, heterotetramer of two alpha and two beta chains arranged as a dimer of alpha/beta heterodimers. Pyruvate is required as a cofactor. Post-translationally, is synthesized initially as an inactive proenzyme. Formation of the active enzyme involves a self-maturation process in which the active site pyruvoyl group is generated from an internal serine residue via an autocatalytic post-translational modification. Two non-identical subunits are generated from the proenzyme in this reaction, and the pyruvate is formed at the N-terminus of the alpha chain, which is derived from the carboxyl end of the proenzyme. The post-translation cleavage follows an unusual pathway, termed non-hydrolytic serinolysis, in which the side chain hydroxyl group of the serine supplies its oxygen atom to form the C-terminus of the beta chain, while the remainder of the serine residue undergoes an oxidative deamination to produce ammonia and the pyruvoyl group blocking the N-terminus of the alpha chain.

The enzyme catalyses S-adenosyl-L-methionine + H(+) = S-adenosyl 3-(methylsulfanyl)propylamine + CO2. Its pathway is amine and polyamine biosynthesis; S-adenosylmethioninamine biosynthesis; S-adenosylmethioninamine from S-adenosyl-L-methionine: step 1/1. In terms of biological role, catalyzes the decarboxylation of S-adenosylmethionine to S-adenosylmethioninamine (dcAdoMet), the propylamine donor required for the synthesis of the polyamines spermine and spermidine from the diamine putrescine. This is S-adenosylmethionine decarboxylase proenzyme from Geobacillus sp. (strain WCH70).